Here is a 150-residue protein sequence, read N- to C-terminus: Interferon antagonist OPG027 (150 aa).

Belongs to the orthopoxvirus OPG027 family.

Functionally, inhibits antiviral activity induced by type I interferons. Does not block signal transduction of IFN, but is important to counteract the host antiviral state induced by a pre-treatment with IFN. The polypeptide is Interferon antagonist OPG027 (OPG027) (Homo sapiens (Human)).